The following is a 208-amino-acid chain: LexA repressor (208 aa).

The H-T-H motif DNA-binding region spans 28–48 (RAEIARELGFRSANAAEEHLK). Active-site for autocatalytic cleavage activity residues include S125 and K162.

This sequence belongs to the peptidase S24 family. As to quaternary structure, homodimer.

It catalyses the reaction Hydrolysis of Ala-|-Gly bond in repressor LexA.. Its function is as follows. Represses a number of genes involved in the response to DNA damage (SOS response), including recA and lexA. In the presence of single-stranded DNA, RecA interacts with LexA causing an autocatalytic cleavage which disrupts the DNA-binding part of LexA, leading to derepression of the SOS regulon and eventually DNA repair. This Aliivibrio fischeri (strain MJ11) (Vibrio fischeri) protein is LexA repressor.